Consider the following 285-residue polypeptide: Taffazin (285 aa).

Topologically, residues 1 to 23 are mitochondrial intermembrane; sequence MDSNNSNNNNKNLKQICDIPKPQ. An intramembrane segment occupies 24–42; that stretch reads FLSKGVFTLVGVLCKFWIS. Over 43 to 285 the chain is Mitochondrial intermembrane; sequence MNTVTTSGID…GRFSHPTIKD (243 aa). Residues 74–79 carry the HXXXXD motif motif; the sequence is HSSNLD.

It belongs to the taffazin family.

Its subcellular location is the mitochondrion outer membrane. It localises to the mitochondrion inner membrane. The enzyme catalyses a 1-acyl-sn-glycero-3-phosphate + a 1,2-diacyl-sn-glycero-3-phospho-(1'-sn-glycerol) = 1-acyl-sn-glycero-3-phospho-(1'-sn-glycerol) + a 1,2-diacyl-sn-glycero-3-phosphate. It catalyses the reaction 1-hexadecanoyl-2-(9Z,12Z-octadecadienoyl)-sn-glycero-3-phospho-(1'-sn-glycerol) + 1-(9Z-octadecenoyl)-sn-glycero-3-phosphate = 1-(9Z)-octadecenoyl-2-(9Z,12Z)-octadecadienoyl-sn-glycero-3-phosphate + 1-hexadecanoyl-sn-glycero-3-phospho-(1'-sn-glycerol). The catalysed reaction is 1'-[1,2-diacyl-sn-glycero-3-phospho],3'-[1-acyl-sn-glycero-3-phospho]-glycerol + a 1,2-diacyl-sn-glycero-3-phosphocholine = a cardiolipin + a 1-acyl-sn-glycero-3-phosphocholine. It carries out the reaction 1-hexadecanoyl-2-(9Z,12Z-octadecadienoyl)-sn-glycero-3-phosphocholine + 1-hexadecanoyl-sn-glycero-3-phosphocholine = 2-(9Z,12Z-octadecadienoyl)-sn-glycero-3-phosphocholine + 1,2-dihexadecanoyl-sn-glycero-3-phosphocholine. The enzyme catalyses 1,2-di-(9Z-octadecenoyl)-sn-glycero-3-phosphocholine + 1-hexadecanoyl-sn-glycero-3-phosphocholine = 1-hexadecanoyl-2-(9Z-octadecenoyl)-sn-glycero-3-phosphocholine + 1-(9Z-octadecenoyl)-sn-glycero-3-phosphocholine. Its pathway is phospholipid metabolism. Functionally, acyltransferase required to remodel newly synthesized phospholipid cardiolipin (1',3'-bis-[1,2-diacyl-sn-glycero-3-phospho]-glycerol or CL), a key component of the mitochondrial inner membrane, with tissue specific acyl chains necessary for adequate mitochondrial function. Its role in cellular physiology is to improve mitochondrial performance. CL is critical for the coassembly of lipids and proteins in mitochondrial membranes, for instance, remodeling of the acyl groups of CL in the mitochondrial inner membrane affects the assembly and stability of respiratory chain complex IV and its supercomplex forms. Catalyzes the transacylation between phospholipids and lysophospholipids, with the highest rate being between phosphatidylcholine (1,2-diacyl-sn-glycero-3-phosphocholine or PC) and CL. Catalyzes both 1-acyl-sn-glycero-3-phosphocholine (lysophosphatidylcholine or LPC) reacylation and PC-CL transacylation, that means, it exchanges acyl groups between CL and PC by a combination of forward and reverse transacylations. Also catalyzes transacylations between other phospholipids such as phosphatidylethanolamine (1,2-diacyl-sn-glycero-3-phosphoethanolamine or PE) and CL, between PC and PE, and between PC and phosphatidate (1,2-diacyl-sn-glycero-3-phosphate or PA), although at lower rate. Not regiospecific, it transfers acyl groups into any of the sn-1 and sn-2 positions of the monolysocardiolipin (MLCL), which is an important prerequisite for uniformity and symmetry in CL acyl distribution. Cannot transacylate dilysocardiolipin (DLCL), thus, the role of MLCL is limited to that of an acyl acceptor. CoA-independent, it can reshuffle molecular species within a single phospholipid class. Redistributes fatty acids between MLCL, CL, and other lipids, which prolongs the half-life of CL. Its action is completely reversible, which allows for cyclic changes, such as fission and fusion or bending and flattening of the membrane. Hence, by contributing to the flexibility of the lipid composition, it plays an important role in the dynamics of mitochondria membranes. This Dictyostelium discoideum (Social amoeba) protein is Taffazin (taz).